Reading from the N-terminus, the 198-residue chain is Na(+)-translocating NADH-quinone reductase subunit E (198 aa).

6 helical membrane-spanning segments follow: residues 11–31 (SVFI…FLAV), 35–55 (VSTA…AVPV), 77–97 (FLNF…LEMI), 110–130 (GIFL…SFMV), 140–160 (VVYG…LAGL), and 176–196 (LGIT…FSGI).

It belongs to the NqrDE/RnfAE family. In terms of assembly, composed of six subunits; NqrA, NqrB, NqrC, NqrD, NqrE and NqrF.

It is found in the cell inner membrane. It carries out the reaction a ubiquinone + n Na(+)(in) + NADH + H(+) = a ubiquinol + n Na(+)(out) + NAD(+). NQR complex catalyzes the reduction of ubiquinone-1 to ubiquinol by two successive reactions, coupled with the transport of Na(+) ions from the cytoplasm to the periplasm. NqrA to NqrE are probably involved in the second step, the conversion of ubisemiquinone to ubiquinol. The sequence is that of Na(+)-translocating NADH-quinone reductase subunit E from Haemophilus ducreyi (strain 35000HP / ATCC 700724).